The primary structure comprises 459 residues: tRNA modification GTPase MnmE (459 aa).

The (6S)-5-formyl-5,6,7,8-tetrahydrofolate site is built by arginine 25, glutamate 87, and arginine 126. Residues 221–380 (GLKVAIVGRP…LETAILEIVQ (160 aa)) enclose the TrmE-type G domain. Asparagine 231 contributes to the K(+) binding site. GTP is bound by residues 231–236 (NVGKSS), 250–256 (TDLPGTT), and 275–278 (DTAG). Serine 235 contributes to the Mg(2+) binding site. Residues threonine 250, leucine 252, and threonine 255 each contribute to the K(+) site. Threonine 256 contacts Mg(2+). Residue lysine 459 participates in (6S)-5-formyl-5,6,7,8-tetrahydrofolate binding.

The protein belongs to the TRAFAC class TrmE-Era-EngA-EngB-Septin-like GTPase superfamily. TrmE GTPase family. Homodimer. Heterotetramer of two MnmE and two MnmG subunits. The cofactor is K(+).

It is found in the cytoplasm. Functionally, exhibits a very high intrinsic GTPase hydrolysis rate. Involved in the addition of a carboxymethylaminomethyl (cmnm) group at the wobble position (U34) of certain tRNAs, forming tRNA-cmnm(5)s(2)U34. The chain is tRNA modification GTPase MnmE from Nostoc sp. (strain PCC 7120 / SAG 25.82 / UTEX 2576).